We begin with the raw amino-acid sequence, 407 residues long: Serine/threonine transporter SstT (407 aa).

Helical transmembrane passes span 11–31, 43–63, 82–102, 141–161, 192–212, 216–236, 298–318, 339–359, and 363–383; these read IIHGSLVLQIIVGIALAVILA, FLGDFFVGALKAIAPILVFVL, IISLYLIGTFAAALTAVLLSF, ALMTGNYIGILAWGIGLGIAL, LGIFGLVAGTVAATGFDALAG, LLMVLVGAMLIMALVVNPLIV, MGGAAITITVLTLAAAHTLGV, ASGVAGGSLLLIPLACSLFGI, and IAMQVVAVGFIIGVVQDSAET.

Belongs to the dicarboxylate/amino acid:cation symporter (DAACS) (TC 2.A.23) family.

It is found in the cell inner membrane. The enzyme catalyses L-serine(in) + Na(+)(in) = L-serine(out) + Na(+)(out). It catalyses the reaction L-threonine(in) + Na(+)(in) = L-threonine(out) + Na(+)(out). In terms of biological role, involved in the import of serine and threonine into the cell, with the concomitant import of sodium (symport system). The sequence is that of Serine/threonine transporter SstT from Shewanella denitrificans (strain OS217 / ATCC BAA-1090 / DSM 15013).